Reading from the N-terminus, the 684-residue chain is Probable potassium transport system protein Kup (684 aa).

The next 12 helical transmembrane spans lie at 19–39 (ALLVTLGVVYGDIGTSPLYVM), 61–81 (VSLIFWTLLIITTVKYVLIAL), 104–124 (WLVLPAMVGGAALLADGMLTP), 151–171 (QVIWVTVLIITFLFFIQRFGT), 177–197 (AFGPIMFVWFTFLGVAGFIAL), 223–243 (MGLFILGSIFLATTGAEALYS), 255–275 (LSWPYVNICLVLNYFGQAVWL), 303–323 (LGAIILATLAAIIASQALISG), 352–372 (LYIPVVNTILWLACLAIIGYF), 381–401 (AYGLAITITMLMTTLLLYQYL), 407–427 (PAVVAIGTLIFFSAIETVFFI), and 433–453 (FLHGGYVTAMIAFIILAVMYV).

The protein belongs to the HAK/KUP transporter (TC 2.A.72) family.

It localises to the cell membrane. The enzyme catalyses K(+)(in) + H(+)(in) = K(+)(out) + H(+)(out). Functionally, transport of potassium into the cell. Likely operates as a K(+):H(+) symporter. This chain is Probable potassium transport system protein Kup, found in Lacticaseibacillus paracasei (strain ATCC 334 / BCRC 17002 / CCUG 31169 / CIP 107868 / KCTC 3260 / NRRL B-441) (Lactobacillus paracasei).